Here is a 190-residue protein sequence, read N- to C-terminus: Protein FAM210B, mitochondrial (190 aa).

A mitochondrion-targeting transit peptide spans 1-58 (MAGLLTLLGPAGRVSTRLRPLAPWLLGTATSCAPPLWALALSHPVPDARLLRTARGDC). Positions 56 to 66 (GDCLSRQEPNR) are enriched in basic and acidic residues. The interval 56–81 (GDCLSRQEPNRTPEPGGSVTGTEKKL) is disordered. One can recognise a DUF1279 domain in the interval 78–189 (EKKLSRTQQL…VGLFKPPATK (112 aa)). Transmembrane regions (helical) follow at residues 97–117 (VGVSMHIGISLVSLGIFYTVV) and 148–168 (FVVAYAIHKLFAPVRISITLV).

It belongs to the FAM210 family. As to expression, expressed in late erythroblast differentiation stages.

It localises to the mitochondrion. Its subcellular location is the mitochondrion outer membrane. Functionally, plays a role in erythroid differentiation. Involved in cell proliferation and tumor cell growth suppression. Involved in the metabolic reprogramming of cancer cells in a PDK4-dependent manner. This Mus musculus (Mouse) protein is Protein FAM210B, mitochondrial.